The primary structure comprises 460 residues: tRNA-splicing endonuclease subunit Sen2 (460 aa).

The tract at residues 143–215 is disordered; it reads EKEETPQHEP…SPSSHNGHVA (73 aa). The span at 159–170 shows a compositional bias: basic and acidic residues; that stretch reads SSLEGRVEKDEL. Catalysis depends on residues Y364 and H372. Phosphoserine is present on residues S403, S406, and S410. K411 is a catalytic residue.

The protein belongs to the tRNA-intron endonuclease family. As to quaternary structure, tRNA splicing endonuclease is a heterotetramer composed of TSEN2, TSEN15, TSEN34/LENG5 and TSEN54. tRNA splicing endonuclease complex also contains proteins of the pre-mRNA 3'-end processing machinery such as CLP1, CPSF1, CPSF4 and CSTF2.

It is found in the nucleus. The protein localises to the nucleolus. It catalyses the reaction pretRNA = a 3'-half-tRNA molecule with a 5'-OH end + a 5'-half-tRNA molecule with a 2',3'-cyclic phosphate end + an intron with a 2',3'-cyclic phosphate and a 5'-hydroxyl terminus.. In terms of biological role, constitutes one of the two catalytic subunit of the tRNA-splicing endonuclease complex, a complex responsible for identification and cleavage of the splice sites in pre-tRNA. It cleaves pre-tRNA at the 5'- and 3'-splice sites to release the intron. The products are an intron and two tRNA half-molecules bearing 2',3'-cyclic phosphate and 5'-OH termini. There are no conserved sequences at the splice sites, but the intron is invariably located at the same site in the gene, placing the splice sites an invariant distance from the constant structural features of the tRNA body. Probably carries the active site for 5'-splice site cleavage. The tRNA splicing endonuclease is also involved in mRNA processing via its association with pre-mRNA 3'-end processing factors, establishing a link between pre-tRNA splicing and pre-mRNA 3'-end formation, suggesting that the endonuclease subunits function in multiple RNA-processing events. This is tRNA-splicing endonuclease subunit Sen2 (Tsen2) from Mus musculus (Mouse).